Reading from the N-terminus, the 362-residue chain is UDP-arabinopyranose mutase 3 (362 aa).

Positions 106–108 (DDD) match the DXD motif motif. N-linked (Glc...) arginine glycosylation is present at R154.

This sequence belongs to the RGP family. As to quaternary structure, heterodimer with RGP1. It depends on Mn(2+) as a cofactor. Mg(2+) is required as a cofactor. Reversibly glycosylated in vitro by UDP-glucose, UDP-xylose and UDP-galactose, but not UDP-mannose. As to expression, specifically expressed in developing seeds.

The protein resides in the cytoplasm. It is found in the cytosol. Its subcellular location is the golgi apparatus. The catalysed reaction is UDP-beta-L-arabinofuranose = UDP-beta-L-arabinopyranose. Functionally, UDP-L-arabinose mutase involved in the biosynthesis of cell wall non-cellulosic polysaccharides. Catalyzes the interconvertion of UDP-L-arabinopyranose (UDP-Arap) and UDP-L-arabinofuranose (UDP-Araf). Preferentially catalyzes the formation of UDP-Arap from UDP-Araf. At thermodynamic equilibrium in vitro the ratio of the pyranose form over the furanose form is 95:5. Is not active on other UDP-sugars (UDP-Gal, UDP-Xyl, UDP-Glc, GDP-Man and GDP-Fuc). Is probably active as heteromer in vivo. The sequence is that of UDP-arabinopyranose mutase 3 from Arabidopsis thaliana (Mouse-ear cress).